A 911-amino-acid chain; its full sequence is MAASQTSQTVASHVPFADLCSTLERIQKSKGRAEKIRHFREFLDSWRKFHDAFHKNQKDVTDSFYPAMRLILPQLERERMAYGIKETMLAKLYIELLNLPRDGKDALKLLNYRTPTGTHGDAGDFAMIAYFVLKPRCLQKGSLTIQQVNDLLDSIASNNSAKRKDLIKKSLLQLITQSSALEQKWLIRMIIKDLKLGVSQQTIFSVFHSDAVELHNVTTDLEKVCRQLHDPSVGLSDISITLFSAFKPMLAAIADIEHIEKDMKHQSFYIETKLDGERMQMHKDGDVYKYFSRNGYNYTDQFGASPTEGSLTPFIHNAFKTDIQICILDGEMMAYNPNTQTFMQKGTKFDIKRMVEDSDLQTCYCVFDVLMVNNKKLGHETLRKRYEILSSIFTPIPGRIEIVQKTQAHTKNEVIDALNEAIDKREEGIMIKQPLSIYKPDKRGEGWLKIKPEYVSGLMDELDILIVGGYWGKGSRGGMMSHFLCAVAEKPPPGEKPSVFHTLSRVGSGCTMKELYDLGLKLAKYWKPFHKKAPPSSILCGTEKPEVYIEPCNSVIVQIKAAEIVPSDMYKTGCTLRFPRIEKIRDDKEWHECMTLDDLEQLRGKASGKLASKHFYVGGDDEPQEKKRKAAPKMKKVIGIIEHLKAPNLTNVNKISNIFEDVEFCVMSGTDSQPKPDLENRIAEFGGYIVQNPGPDTYCVIAGSKNIRVKNIILSNKHDVVKPAWLLECFKTKSFVPWQPHFMIHMCPSTKEHFAREYDCYGDSYFVDTDLNQLKEVFSGIKNSNEQTPEEMASLIADLEYRYSWDCSPLSMFRRHTVYLDLYAVINDLSTKNEGTRLAIKALELRFHGAKVVSCLAEGVSHVIIGEDHSRIADFKAFRRTFKRKFKILKESWITDSIDKCELQEENQYLI.

ATP is bound by residues glutamate 271, threonine 272, lysine 273, leucine 274, arginine 278, glutamate 331, lysine 345, phenylalanine 367, glutamate 427, lysine 432, lysine 449, and lysine 451. The active-site N6-AMP-lysine intermediate is the lysine 273. Residue glutamate 331 participates in Mg(2+) binding. Glutamate 427 serves as a coordination point for Mg(2+). The segment at 610-620 is required for catalytic activity; the sequence is LASKHFYVGGD. BRCT domains follow at residues 654 to 743 and 808 to 911; these read KISN…PHFM and SPLS…QYLI.

It belongs to the ATP-dependent DNA ligase family. In terms of assembly, interacts with XRCC4; the LIG4-XRCC4 subcomplex has a 1:2 stoichiometry and XRCC4 is required for LIG4 stability. Component of the core long-range non-homologous end joining (NHEJ) complex (also named DNA-PK complex) composed of PRKDC, LIG4, XRCC4, XRCC6/Ku70, XRCC5/Ku86 and NHEJ1/XLF. Additional component of the NHEJ complex includes PAXX. Following autophosphorylation, PRKDC dissociates from DNA, leading to formation of the short-range NHEJ complex, composed of LIG4, XRCC4, XRCC6/Ku70, XRCC5/Ku86 and NHEJ1/XLF. Interacts with DCLRE1C; the interaction is direct. Interacts with APLF. Mg(2+) is required as a cofactor.

The protein localises to the nucleus. The catalysed reaction is ATP + (deoxyribonucleotide)n-3'-hydroxyl + 5'-phospho-(deoxyribonucleotide)m = (deoxyribonucleotide)n+m + AMP + diphosphate.. Its function is as follows. DNA ligase involved in DNA non-homologous end joining (NHEJ); required for double-strand break (DSB) repair and V(D)J recombination. Catalyzes the NHEJ ligation step of the broken DNA during DSB repair by resealing the DNA breaks after the gap filling is completed. Joins single-strand breaks in a double-stranded polydeoxynucleotide in an ATP-dependent reaction. LIG4 is mechanistically flexible: it can ligate nicks as well as compatible DNA overhangs alone, while in the presence of XRCC4, it can ligate ends with 2-nucleotides (nt) microhomology and 1-nt gaps. Forms a subcomplex with XRCC4; the LIG4-XRCC4 subcomplex is responsible for the NHEJ ligation step and XRCC4 enhances the joining activity of LIG4. Binding of the LIG4-XRCC4 complex to DNA ends is dependent on the assembly of the DNA-dependent protein kinase complex DNA-PK to these DNA ends. LIG4 regulates nuclear localization of XRCC4. The protein is DNA ligase 4 of Pongo abelii (Sumatran orangutan).